The following is a 495-amino-acid chain: UDP-glycosyltransferase 71B7 (495 aa).

Residues Ser-284, 351–353 (APQ), 368–376 (HCGWNSTLE), and 390–393 (YAEQ) contribute to the UDP-alpha-D-glucose site.

This sequence belongs to the UDP-glycosyltransferase family.

The polypeptide is UDP-glycosyltransferase 71B7 (UGT71B7) (Arabidopsis thaliana (Mouse-ear cress)).